Here is a 614-residue protein sequence, read N- to C-terminus: Zinc finger protein 276 (614 aa).

Residues 1-46 are disordered; the sequence is MKRDRLGRFLSPGIARQRGGSGGGCGSGRTRGRPSRSGGTSADGAA. The span at 19–29 shows a compositional bias: gly residues; it reads GGSGGGCGSGR. In terms of domain architecture, ZAD spans 78–164; it reads GHCRLCHGKF…LQRVNVSPAG (87 aa). 4 residues coordinate Zn(2+): C80, C83, C137, and C140. Residues 271–422 form a disordered region; the sequence is RLAQNSESNP…PGPKPGWKKK (152 aa). Polar residues-rich tracts occupy residues 272-282 and 291-302; these read LAQNSESNPTG and RETQVGSETKTL. Residues 357–369 show a composition bias toward acidic residues; the sequence is SDLSEGDFLSEDE. Over residues 386–408 the composition is skewed to basic and acidic residues; it reads YPEKKVSGKKSEGREAKRPEEPK. Residues 409 to 422 show a composition bias toward basic residues; it reads IRKKPGPKPGWKKK. 5 C2H2-type zinc fingers span residues 434–458, 465–490, 496–518, 524–546, and 554–577; these read YKCP…IKEH, RPCP…KLIH, YICD…QMRH, LQCE…MTKH, and FACD…SMVH. The segment at 588–614 is disordered; it reads PLEAEPPPGPLSPSGTMEGQAVKPEPT.

As to expression, found in all the examined tissues, with highest levels in kidney, liver, lung, and spleen.

The protein localises to the nucleus. The protein resides in the chromosome. It localises to the centromere. It is found in the kinetochore. In terms of biological role, may be involved in transcriptional regulation. The sequence is that of Zinc finger protein 276 (Znf276) from Mus musculus (Mouse).